The chain runs to 726 residues: MSKRKSPHDFLFREELGHGSYSTVYRVVERSSQHQYAIKICSKRHIIGENKVKYVTIEKNTLNLLGQANHPGIIKLYYTFHDQENLYFVMDLAPGGELLQLLRRQRVFSEAWARHYMCQLVDTVEYIHSMGVIHRDLKPENVLLDKEGRLMIADFGAAYTVGQSDAGSDGDKPATSFVGTAEYVSPELLLENKSYYSSDVWALGCMLYQFLQGTPPFRGQNEMETFEQIVNLDYTWRIPANPLAAGLVSKILVLDPSQRYTLEQIKKHKWFSGVDWNNKEKIWRGSWTIASESTPRPRVGYKSRELLDTPIKNIPVVTQRNKKPTKMNTTSSIVEWRKMLGLSGNDLGIKATLGGNGLPIAPFTPTSGITPDNRGDNAVAPAKTRDAFRPMSSRVISSPHSKPSGRPAALPLPLQTGTPSHNVVQQIVVNTPGRTETSSPYVSPTVPVRNAIWKQDWVQLHEIPYSAKYSGLTLAGFSQVSDTLIADLISHHANELRTLSRTGILSLDNTGYLSFIEQGRARPLSRIIDPDLSIYEYQLGHSTEDDFLILEKYKQSIWIVWPNKPTSASRRIPIKETWAQTLSKYKKQVSDEEELSAKLNRTCVSSWGSRTPSPTYPAEGKTRVAVQPQDIPLPSPAKSSSNSGVSEPISKIPPRQLVSASEQSHKAKSEAHTKKANSYSYIAPNDMVLSSSRYEVLRTASNNDSKSNGAAVSGASAAFRTLRVNK.

Residues 10–271 (FLFREELGHG…LEQIKKHKWF (262 aa)) enclose the Protein kinase domain. ATP contacts are provided by residues 16 to 24 (LGHGSYSTV) and lysine 39. Aspartate 136 (proton acceptor) is an active-site residue. The tract at residues 629–679 (QDIPLPSPAKSSSNSGVSEPISKIPPRQLVSASEQSHKAKSEAHTKKANSY) is disordered. The span at 663–673 (QSHKAKSEAHT) shows a compositional bias: basic and acidic residues.

This sequence belongs to the protein kinase superfamily. Ser/Thr protein kinase family.

The catalysed reaction is L-seryl-[protein] + ATP = O-phospho-L-seryl-[protein] + ADP + H(+). It carries out the reaction L-threonyl-[protein] + ATP = O-phospho-L-threonyl-[protein] + ADP + H(+). Its function is as follows. Serine/threonine-protein kinase. The sequence is that of Serine/threonine-protein kinase PKH3 (PKH3) from Eremothecium gossypii (strain ATCC 10895 / CBS 109.51 / FGSC 9923 / NRRL Y-1056) (Yeast).